The sequence spans 326 residues: Phenylserine dehydratase (326 aa).

In terms of assembly, monomer. Requires pyridoxal 5'-phosphate as cofactor.

The enzyme catalyses L-threo-3-phenylserine = 3-phenylpyruvate + NH4(+). Its activity is regulated as follows. Inhibited by phenylhydrazine, hydroxylamine, p-chloromercuribenzoate, and HgCl(2). This is Phenylserine dehydratase from Ralstonia pickettii (Burkholderia pickettii).